The sequence spans 367 residues: Ganglioside-induced differentiation-associated protein 1-like 1 (367 aa).

The GST N-terminal domain maps to 45–126 (ESLVLYHWTQ…YVERTFTGEH (82 aa)). Residues 174 to 341 (PKYATAEIRR…RLVKRKPPSF (168 aa)) form the GST C-terminal domain.

The protein belongs to the GST superfamily.

The polypeptide is Ganglioside-induced differentiation-associated protein 1-like 1 (GDAP1L1) (Homo sapiens (Human)).